The primary structure comprises 130 residues: Anti-adapter protein IraD (130 aa).

This sequence belongs to the GpW/Gp25 family. IraD subfamily. Interacts with RssB.

Its subcellular location is the cytoplasm. Inhibits RpoS proteolysis by regulating RssB activity, thereby increasing the stability of the sigma stress factor RpoS during oxidative stress. Its effect on RpoS stability is due to its interaction with RssB, which probably blocks the interaction of RssB with RpoS, and the consequent delivery of the RssB-RpoS complex to the ClpXP protein degradation pathway. The polypeptide is Anti-adapter protein IraD (Shigella boydii serotype 4 (strain Sb227)).